Reading from the N-terminus, the 74-residue chain is Putative membrane protein insertion efficiency factor (74 aa).

This sequence belongs to the UPF0161 family.

Its subcellular location is the cell inner membrane. Its function is as follows. Could be involved in insertion of integral membrane proteins into the membrane. In Anaeromyxobacter sp. (strain Fw109-5), this protein is Putative membrane protein insertion efficiency factor.